Consider the following 185-residue polypeptide: Ribose 1,5-bisphosphate phosphokinase PhnN (185 aa).

The protein belongs to the ribose 1,5-bisphosphokinase family.

It catalyses the reaction alpha-D-ribose 1,5-bisphosphate + ATP = 5-phospho-alpha-D-ribose 1-diphosphate + ADP. It functions in the pathway metabolic intermediate biosynthesis; 5-phospho-alpha-D-ribose 1-diphosphate biosynthesis; 5-phospho-alpha-D-ribose 1-diphosphate from D-ribose 5-phosphate (route II): step 3/3. Its function is as follows. Catalyzes the phosphorylation of ribose 1,5-bisphosphate to 5-phospho-D-ribosyl alpha-1-diphosphate (PRPP). In Escherichia coli (strain SMS-3-5 / SECEC), this protein is Ribose 1,5-bisphosphate phosphokinase PhnN.